A 164-amino-acid chain; its full sequence is SsrA-binding protein (164 aa).

Residues 143–164 form a disordered region; sequence HDKRQDEKQKSIKKEINSVLKR. A compositionally biased stretch (basic and acidic residues) spans 145 to 158; the sequence is KRQDEKQKSIKKEI.

This sequence belongs to the SmpB family.

Its subcellular location is the cytoplasm. Its function is as follows. Required for rescue of stalled ribosomes mediated by trans-translation. Binds to transfer-messenger RNA (tmRNA), required for stable association of tmRNA with ribosomes. tmRNA and SmpB together mimic tRNA shape, replacing the anticodon stem-loop with SmpB. tmRNA is encoded by the ssrA gene; the 2 termini fold to resemble tRNA(Ala) and it encodes a 'tag peptide', a short internal open reading frame. During trans-translation Ala-aminoacylated tmRNA acts like a tRNA, entering the A-site of stalled ribosomes, displacing the stalled mRNA. The ribosome then switches to translate the ORF on the tmRNA; the nascent peptide is terminated with the 'tag peptide' encoded by the tmRNA and targeted for degradation. The ribosome is freed to recommence translation, which seems to be the essential function of trans-translation. The sequence is that of SsrA-binding protein from Prochlorococcus marinus (strain MIT 9312).